Consider the following 704-residue polypeptide: Elongation factor G (704 aa).

The 283-residue stretch at 8-290 (ARYRNIGISA…AVIDYLPSPV (283 aa)) folds into the tr-type G domain. GTP contacts are provided by residues 17 to 24 (AHIDAGKT), 88 to 92 (DTPGH), and 142 to 145 (NKMD).

The protein belongs to the TRAFAC class translation factor GTPase superfamily. Classic translation factor GTPase family. EF-G/EF-2 subfamily.

The protein resides in the cytoplasm. In terms of biological role, catalyzes the GTP-dependent ribosomal translocation step during translation elongation. During this step, the ribosome changes from the pre-translocational (PRE) to the post-translocational (POST) state as the newly formed A-site-bound peptidyl-tRNA and P-site-bound deacylated tRNA move to the P and E sites, respectively. Catalyzes the coordinated movement of the two tRNA molecules, the mRNA and conformational changes in the ribosome. This Salmonella agona (strain SL483) protein is Elongation factor G.